Reading from the N-terminus, the 186-residue chain is Elongation factor P (186 aa).

This sequence belongs to the elongation factor P family.

Its subcellular location is the cytoplasm. It functions in the pathway protein biosynthesis; polypeptide chain elongation. In terms of biological role, involved in peptide bond synthesis. Stimulates efficient translation and peptide-bond synthesis on native or reconstituted 70S ribosomes in vitro. Probably functions indirectly by altering the affinity of the ribosome for aminoacyl-tRNA, thus increasing their reactivity as acceptors for peptidyl transferase. This chain is Elongation factor P, found in Clostridium acetobutylicum (strain ATCC 824 / DSM 792 / JCM 1419 / IAM 19013 / LMG 5710 / NBRC 13948 / NRRL B-527 / VKM B-1787 / 2291 / W).